Consider the following 186-residue polypeptide: Translation initiation factor IF-3 (186 aa).

Belongs to the IF-3 family. In terms of assembly, monomer.

It localises to the cytoplasm. Functionally, IF-3 binds to the 30S ribosomal subunit and shifts the equilibrium between 70S ribosomes and their 50S and 30S subunits in favor of the free subunits, thus enhancing the availability of 30S subunits on which protein synthesis initiation begins. The polypeptide is Translation initiation factor IF-3 (Chlamydia muridarum (strain MoPn / Nigg)).